A 710-amino-acid chain; its full sequence is MSQEKQVFSIDLAGRQLTIETGQLAKQANGAVLVRYGDTAVLSTATASKEAKDVDFFPLTVNYEERLYAVGKIPGGFIKREGRPSEKAILASRLIDRPIRPLFADGFRNEVQVVSIVMSVDQDCSSEMAAMLGSSLALSISDIPFEGPIAGATVGRIDGEFIINPTVEQQEKSDIHLVVAGTKDAINMVEAGADQVPEETMLEAIMFGHEEIKRLIAFQEEIVQAVGKEKMEVKLYEVDAELEKAVREMAEKDMHTAIQVHEKHAREDAINEVKQRVIAHYEEQEVEAEVLGQVSEILYKIVKEEVRRLITVEKIRPDGRKSDEIRPLASEVGILPRTHGSGLFTRGQTQALSICTLGALGDVQILDGLGVEESKRFMHHYNFPSFSVGETRPMRGPGRREIGHGALGERALEPVIPSEKDFPYTVRLVSEVLESNGSTSQASICGSTLAMMDAGVPLKAPVAGIAMGLVKSGEHYTILTDIQGMEDHLGDMDFKVAGTAKGVTALQMDIKIDGLSREILEEALQQAKVGRMHILDHMLSVIAEPRKELSEYAPKIITMTINPDKIRDVIGPSGKQINKIIEETGVKIDIEQDGTVFISSIDQQMNEKAKKIIEDIVREVQVGEIYLGKVKRIEKFGAFVELFSGKDGLVHISELALERVGKVEDVVKIGDEISVKVIEIDKQGRVNLSRKVLLKEEQEKEVAKEEATQE.

The Mg(2+) site is built by aspartate 487 and aspartate 493. Positions 554-613 (PKIITMTINPDKIRDVIGPSGKQINKIIEETGVKIDIEQDGTVFISSIDQQMNEKAKKII) constitute a KH domain. Positions 623–691 (GEIYLGKVKR…KQGRVNLSRK (69 aa)) constitute an S1 motif domain.

It belongs to the polyribonucleotide nucleotidyltransferase family. The cofactor is Mg(2+).

It localises to the cytoplasm. The catalysed reaction is RNA(n+1) + phosphate = RNA(n) + a ribonucleoside 5'-diphosphate. Its function is as follows. Involved in mRNA degradation. Catalyzes the phosphorolysis of single-stranded polyribonucleotides processively in the 3'- to 5'-direction. This chain is Polyribonucleotide nucleotidyltransferase, found in Bacillus cytotoxicus (strain DSM 22905 / CIP 110041 / 391-98 / NVH 391-98).